Reading from the N-terminus, the 335-residue chain is Phosphatidylinositol:ceramide inositolphosphotransferase (335 aa).

At 1–21 (MVLMGPHSALRLLPLKTQAIR) the chain is on the cytoplasmic side. Residues 22–42 (FVLLLLLSVLILAVALLVTNA) traverse the membrane as a helical segment. Topologically, residues 43 to 72 (RMPDPKVVRPLPDIGFEVFPKVGWLEHLTD) are extracellular. A helical transmembrane segment spans residues 73-93 (VCIFILNFLSLLVVFKLYLLH). Residues 94-98 (RQNEG) are Cytoplasmic-facing. Residues 99-119 (LDELQPFSCCPLIGKIIFGVW) form a helical membrane-spanning segment. Residues 120–139 (DSGRQSGIEKRDAHLIAWIR) are Extracellular-facing. Residues 140–160 (YFTTYFIVLLFRAIVVVMTSY) traverse the membrane as a helical segment. Residues 161–179 (PATDNHCQNPMKITNPVKN) are Cytoplasmic-facing. Residues 180–200 (VIMTLVTFGSGSIHCGDLMFS) traverse the membrane as a helical segment. At 201–203 (GHT) the chain is on the extracellular side. The active site involves histidine 202. A helical transmembrane segment spans residues 204–224 (VSITLSLLVQWIYGSMLHWVF). At 225-335 (RPASVLLVLL…GPACGNFGHW (111 aa)) the chain is on the cytoplasmic side. Residues histidine 245 and aspartate 249 contribute to the active site.

It belongs to the sphingomyelin synthase family.

It localises to the membrane. Functionally, bidirectional lipid inositolphosphotransferase capable of converting phosphatidylinositol (PI) and ceramide to inositol-phosphorylceramide (IPC) and diacylglycerol (DAG) and vice versa. Direction is dependent on the relative concentrations of DAG and ceramide as phosphoinositol acceptors. Essential for viability of the pathogenic bloodstream stage of this human protozoan parasite and, consequently, can be considered as potential drug target. This is Phosphatidylinositol:ceramide inositolphosphotransferase from Trypanosoma cruzi (strain CL Brener).